The primary structure comprises 253 residues: 5'-nucleotidase SurE (253 aa).

Residues D8, D9, S40, and N92 each contribute to the a divalent metal cation site.

It belongs to the SurE nucleotidase family. Requires a divalent metal cation as cofactor.

It localises to the cytoplasm. The catalysed reaction is a ribonucleoside 5'-phosphate + H2O = a ribonucleoside + phosphate. Its function is as follows. Nucleotidase that shows phosphatase activity on nucleoside 5'-monophosphates. The protein is 5'-nucleotidase SurE of Hyphomonas neptunium (strain ATCC 15444).